Consider the following 710-residue polypeptide: Proline-rich receptor-like protein kinase PERK13 (710 aa).

The tract at residues 1 to 229 (MSDSPTSSPP…SVPPPANSGG (229 aa)) is disordered. Residues 1-235 (MSDSPTSSPP…NSGGGYQGKT (235 aa)) lie on the Extracellular side of the membrane. 4 stretches are compositionally biased toward pro residues: residues 7 to 21 (SSPP…PPPD), 29 to 130 (APPP…PPPP), 137 to 151 (PPAP…PPAS), and 168 to 188 (ATSP…PNAP). An N-linked (GlcNAc...) asparagine glycan is attached at asparagine 191. A compositionally biased stretch (low complexity) spans 209 to 220 (SPSRGVPSSGNS). The helical transmembrane segment at 236 to 256 (MAGFAIAGFAVIALMAVVFLV) threads the bilayer. At 257-710 (RRKKKRNIDA…ENRNFNNRRY (454 aa)) the chain is on the cytoplasmic side. Residues 289-334 (QNPTKGYSGPGGYNSQQQSNSGNSFGSQRGGGGYTRSGSAPDSAVM) form a disordered region. Low complexity predominate over residues 301 to 315 (YNSQQQSNSGNSFGS). Threonine 342 is subject to Phosphothreonine. In terms of domain architecture, Protein kinase spans 353 to 619 (FSKHNILGEG…RHSGPKRPRM (267 aa)). Residues 359-367 (LGEGGFGCV) and lysine 381 contribute to the ATP site. Tyrosine 426 carries the post-translational modification Phosphotyrosine. Aspartate 477 acts as the Proton acceptor in catalysis. A Phosphoserine modification is found at serine 510. 2 positions are modified to phosphothreonine: threonine 511 and threonine 516. Tyrosine 524 is modified (phosphotyrosine). The disordered stretch occupies residues 676 to 710 (SGDYSVQDSRKGSNGASSEFTRNETENRNFNNRRY).

This sequence belongs to the protein kinase superfamily. Ser/Thr protein kinase family. Interacts with KIPK1 and KIPK2 (via its cytosolic domain). As to expression, mostly expressed in roots, especially in root hairs.

The protein localises to the cell membrane. It carries out the reaction L-seryl-[protein] + ATP = O-phospho-L-seryl-[protein] + ADP + H(+). The catalysed reaction is L-threonyl-[protein] + ATP = O-phospho-L-threonyl-[protein] + ADP + H(+). Functionally, negatively regulates root hair elongation. In Arabidopsis thaliana (Mouse-ear cress), this protein is Proline-rich receptor-like protein kinase PERK13 (PERK13).